Reading from the N-terminus, the 299-residue chain is Muscleblind-like protein (299 aa).

2 consecutive C3H1-type zinc fingers follow at residues 38-66 and 72-100; these read WLQV…HPPP and QGRV…HPPQ.

It belongs to the muscleblind family.

It is found in the nucleus. Binds to RNA with repeat sequences CUG and CCUG. The polypeptide is Muscleblind-like protein (Caenorhabditis briggsae).